The following is a 1577-amino-acid chain: MAP kinase-activating death domain protein (1577 aa).

The uDENN domain occupies 13 to 267; the sequence is YLVIVGARHP…VPVSGQKRVD (255 aa). Positions 106–121 are enriched in basic and acidic residues; the sequence is KEKVEGGAGPRGKEGA. The tract at residues 106–166 is disordered; the sequence is KEKVEGGAGP…WGKRRAKAGS (61 aa). Over residues 123-140 the composition is skewed to low complexity; it reads TSGASEEAATGSSESGST. Residues 141 to 156 are compositionally biased toward polar residues; sequence LQPPSADSTPDINQSP. A Phosphoserine modification is found at Ser-155. The 141-residue stretch at 288 to 428 folds into the cDENN domain; the sequence is RFTLVDFPLH…ESLELKKHLK (141 aa). The region spanning 430 to 564 is the dDENN domain; that stretch reads ALASMSLNTQ…LNPSNYAFQR (135 aa). Disordered stretches follow at residues 604–635 and 676–840; these read LSVP…SSYS and QPQK…NSTE. Acidic residues predominate over residues 614–629; sequence SDPTEDSGSDSQDYDD. Residues Ser-688 and Ser-691 each carry the phosphoserine modification. The span at 688–698 shows a compositional bias: polar residues; it reads SENSQENPPLR. The span at 699–715 shows a compositional bias: low complexity; the sequence is SSSSTTASSSPSTVVHS. The segment covering 793–803 has biased composition (polar residues); it reads PRFSQHVSGSR. Residues Ser-812, Ser-817, and Ser-819 each carry the phosphoserine modification. Over residues 826–839 the composition is skewed to low complexity; it reads RASSPNSTVSNNST. Ser-857, Ser-861, Ser-915, Ser-920, Ser-929, and Ser-1058 each carry phosphoserine. Disordered stretches follow at residues 912-940, 1050-1109, and 1127-1272; these read QKSS…SSEN, KEPD…DTRS, and EVKK…RSSE. Residues 928-938 show a composition bias toward low complexity; sequence SSPQGRSSNSS. A phosphothreonine mark is found at Thr-1060 and Thr-1065. Ser-1109 is subject to Phosphoserine. A compositionally biased stretch (basic and acidic residues) spans 1127-1141; it reads EVKKQKALEKQRPEG. Over residues 1157–1172 the composition is skewed to polar residues; it reads QMSADSGVSLTSASQR. The segment covering 1189 to 1203 has biased composition (low complexity); sequence SSSQDSEVSTVSNSS. The segment covering 1232–1248 has biased composition (polar residues); the sequence is SRATLSDSEIETNSATS. Thr-1235 carries the post-translational modification Phosphothreonine. A phosphoserine mark is found at Ser-1237 and Ser-1266. The Death domain maps to 1336–1411; that stretch reads GMDQGPQEMI…GLVYSQQVNE (76 aa).

Belongs to the MADD family. As to quaternary structure, interacts (via death domain) with TNFRSF1A (via death domain). Interacts with PIDD1. Interacts with YWHAZ. Interacts (via death domain) with KIF1B; links the motor KIF1B to Rab3-carrying vesicles in anterograde synaptic vesicle transport. Interacts with KIF1A. Interacts (via uDENN domain) with RAB3A, RAB3B, RAB3C and RAB3D; the GTP-bound form of the Rab proteins is preferred for interaction. As to expression, expressed in the brain.

It localises to the cell membrane. Its subcellular location is the cytoplasm. The protein localises to the cell projection. It is found in the axon. Its function is as follows. Guanyl-nucleotide exchange factor that regulates small GTPases of the Rab family. Converts GDP-bound inactive form of RAB27A and RAB27B to the GTP-bound active forms. Converts GDP-bound inactive form of RAB3A, RAB3C and RAB3D to the GTP-bound active forms, GTPases involved in synaptic vesicle exocytosis and vesicle secretion. Plays a role in synaptic vesicle formation and in vesicle trafficking at the neuromuscular junction. Involved in up-regulating a post-docking step of synaptic exocytosis in central synapses. Probably by binding to the motor proteins KIF1B and KIF1A, mediates motor-dependent transport of GTP-RAB3A-positive vesicles to the presynaptic nerve terminals. Plays a role in TNFA-mediated activation of the MAPK pathway, including ERK1/2. May link TNFRSF1A with MAP kinase activation. May be involved in the regulation of TNFA-induced apoptosis. This Mus musculus (Mouse) protein is MAP kinase-activating death domain protein.